The primary structure comprises 436 residues: Chromosomal replication initiator protein DnaA (436 aa).

The tract at residues 1–80 is domain I, interacts with DnaA modulators; the sequence is MSHEAVWQHV…QAPRFELRVV (80 aa). The domain II stretch occupies residues 80-100; sequence VPGVVVQEDIFQAAPAEAPRP. A domain III, AAA+ region region spans residues 101–317; that stretch reads KLNPKYTFEN…GALMRAIAFA (217 aa). 4 residues coordinate ATP: Gly145, Gly147, Lys148, and Thr149. A domain IV, binds dsDNA region spans residues 318 to 436; that stretch reads SLNGVELTRA…LLRTLREACT (119 aa).

This sequence belongs to the DnaA family. As to quaternary structure, oligomerizes as a right-handed, spiral filament on DNA at oriC.

The protein resides in the cytoplasm. The catalysed reaction is ATP + H2O = ADP + phosphate + H(+). Functionally, plays an essential role in the initiation and regulation of chromosomal replication. ATP-DnaA binds to the origin of replication (oriC) to initiate formation of the DNA replication initiation complex once per cell cycle. Binds the DnaA box (a 9 base pair repeat at the origin) and separates the double-stranded (ds)DNA. Forms a right-handed helical filament on oriC DNA; dsDNA binds to the exterior of the filament while single-stranded (ss)DNA is stabiized in the filament's interior. The ATP-DnaA-oriC complex binds and stabilizes one strand of the AT-rich DNA unwinding element (DUE), permitting loading of DNA polymerase. After initiation quickly degrades to an ADP-DnaA complex that is not apt for DNA replication. Binds acidic phospholipids. In terms of biological role, the DnaA box consensus is 5'-TTATC[CA]A[CA]A-3' in this bacterium; oriC consists of 13 clustered DnaA boxes and a 40 base pair AT-rich region. ATP-DnaA binds cooperatively to multiple DnaA boxes, while ADP-DnaA binds with low cooperativity to the individual DnaA boxes. About 16-18 DnaA protein molecules bind their sites in oriC. Has a slow ATPase activity. Binds linear and supercoiled DNA. This is Chromosomal replication initiator protein DnaA from Thermus thermophilus (strain ATCC 27634 / DSM 579 / HB8).